The sequence spans 354 residues: Protein RecA (354 aa).

Gly67–Thr74 serves as a coordination point for ATP.

The protein belongs to the RecA family.

It is found in the cytoplasm. Functionally, can catalyze the hydrolysis of ATP in the presence of single-stranded DNA, the ATP-dependent uptake of single-stranded DNA by duplex DNA, and the ATP-dependent hybridization of homologous single-stranded DNAs. It interacts with LexA causing its activation and leading to its autocatalytic cleavage. The polypeptide is Protein RecA (Serratia marcescens).